The primary structure comprises 85 residues: Small ribosomal subunit protein bS20 (85 aa).

The protein belongs to the bacterial ribosomal protein bS20 family.

Functionally, binds directly to 16S ribosomal RNA. This is Small ribosomal subunit protein bS20 from Borrelia hermsii (strain HS1 / DAH).